The following is a 345-amino-acid chain: Transmembrane protein 144 homolog (345 aa).

The next 10 helical transmembrane spans lie at 3–23, 32–52, 61–81, 84–104, 120–140, 193–213, 233–253, 265–285, 293–313, and 324–344; these read IAVG…MFVP, GIFV…VVYS, PLAM…VPIM, IGIG…GWAA, PFLN…FSQI, LAII…VPVI, VFSH…GYVI, LVGP…SWFV, AVSF…WSVF, and LRLL…VGVS.

It belongs to the TMEM144 family.

Its subcellular location is the membrane. This Caenorhabditis elegans protein is Transmembrane protein 144 homolog.